A 297-amino-acid chain; its full sequence is Light-independent protochlorophyllide reductase iron-sulfur ATP-binding protein (297 aa).

ATP is bound by residues 41 to 46 and Lys-70; that span reads GIGKST. Mg(2+) is bound at residue Ser-45. Cys-126 and Cys-160 together coordinate [4Fe-4S] cluster. ATP contacts are provided by residues 211-212 and 235-237; these read NR and PDL.

The protein belongs to the NifH/BchL/ChlL family. As to quaternary structure, homodimer. Protochlorophyllide reductase is composed of three subunits; BchL, BchN and BchB. [4Fe-4S] cluster is required as a cofactor.

The enzyme catalyses chlorophyllide a + oxidized 2[4Fe-4S]-[ferredoxin] + 2 ADP + 2 phosphate = protochlorophyllide a + reduced 2[4Fe-4S]-[ferredoxin] + 2 ATP + 2 H2O. It participates in porphyrin-containing compound metabolism; bacteriochlorophyll biosynthesis (light-independent). Component of the dark-operative protochlorophyllide reductase (DPOR) that uses Mg-ATP and reduced ferredoxin to reduce ring D of protochlorophyllide (Pchlide) to form chlorophyllide a (Chlide). This reaction is light-independent. The L component serves as a unique electron donor to the NB-component of the complex, and binds Mg-ATP. This chain is Light-independent protochlorophyllide reductase iron-sulfur ATP-binding protein, found in Methylorubrum populi (strain ATCC BAA-705 / NCIMB 13946 / BJ001) (Methylobacterium populi).